Here is a 231-residue protein sequence, read N- to C-terminus: Large ribosomal subunit protein uL1 (231 aa).

Belongs to the universal ribosomal protein uL1 family. As to quaternary structure, part of the 50S ribosomal subunit.

Functionally, binds directly to 23S rRNA. The L1 stalk is quite mobile in the ribosome, and is involved in E site tRNA release. Its function is as follows. Protein L1 is also a translational repressor protein, it controls the translation of the L11 operon by binding to its mRNA. In Buchnera aphidicola subsp. Acyrthosiphon pisum (strain 5A), this protein is Large ribosomal subunit protein uL1.